The primary structure comprises 375 residues: uncharacterized protein (375 aa).

The protein belongs to the IMPDH/GMPR family.

This is an uncharacterized protein from Mycobacterium leprae (strain TN).